A 329-amino-acid polypeptide reads, in one-letter code: Biotin synthase (329 aa).

The Radical SAM core domain occupies 46–275 (YYGNKVKLNM…TKEIRISGGR (230 aa)). Cysteine 64, cysteine 68, and cysteine 71 together coordinate [4Fe-4S] cluster. The [2Fe-2S] cluster site is built by cysteine 108, cysteine 140, cysteine 200, and arginine 270.

Belongs to the radical SAM superfamily. Biotin synthase family. As to quaternary structure, homodimer. [4Fe-4S] cluster serves as cofactor. [2Fe-2S] cluster is required as a cofactor.

The enzyme catalyses (4R,5S)-dethiobiotin + (sulfur carrier)-SH + 2 reduced [2Fe-2S]-[ferredoxin] + 2 S-adenosyl-L-methionine = (sulfur carrier)-H + biotin + 2 5'-deoxyadenosine + 2 L-methionine + 2 oxidized [2Fe-2S]-[ferredoxin]. It participates in cofactor biosynthesis; biotin biosynthesis; biotin from 7,8-diaminononanoate: step 2/2. Its function is as follows. Catalyzes the conversion of dethiobiotin (DTB) to biotin by the insertion of a sulfur atom into dethiobiotin via a radical-based mechanism. This is Biotin synthase from Anoxybacillus flavithermus (strain DSM 21510 / WK1).